The sequence spans 1073 residues: MSDSEEDLGVQLKGLKIARHLKESGEHTDEESNSSPEHDCGLSNQDDLTVMHTQAKEEVFKRREEDGTRTEDALHEGEAGKEGTGFPSSQSVCSPNEADSGIDRADKPILLDPFKSVHDTDPVPGTKSRSNSDSDSDSDDGGWQEMPAVSSFNIYNHRGELELTSKVRNSEQASETSPTVPPGKNCKSVNDSRFDYTKMAAEQQAQRSYRTNKKTDFLFDHKVLKKKINSSQTSVNLTSSPSTTSLNNEKNNDDDDDDSYDEYEDDVEPVNDLNRDSQLNITKNLLSDMEKFAYVGAINILANQMCTNLATLCLCIDIKSHKKLAHRLQFTQKDMAAWKTVVLSRLYDHLGISQEEIVMIEKLSLHKIQLEDLCKCLKTTQSIDNPWENDRDHEEDGIEETTERMSPNEQNGSVQASTPDPEQSATPETPKAKQSPLSSDVPGKVLDPENVKSQDKLNIDVAWTIICDLFLICLQSSTYDSRSRTLLINFAKVLNMTSLEICEFERRVTDSLDMEQSTEDQVWDEQDHMRNRRRSKRRKKMAYVALAMVGGSLVLGLSGGLLAPVIGGGIAAGLSTIGITGATSFLTGVGGTTVVAVSSTAIGANIGARGMSKRMGSVRTFEFRPLHNNRRVNLILTVSGWMVGNEDDVRLPFSTVDPVEGDLYSLYWEPEMLKSIGQTVSIVATEIFTTSLQQILGATVLTALISSIQWPMALSKLGYILDNPWNVSLDRAWSAGKILADTLIARNLGARPITLVGFSIGARVIFSCLIELCKKKALGLIENVYLFGTPAVMKKEQLVMARSVVSGRFVNGYSDKDWFLAYLFRAAAGGFSAVMGISTIENVEGIENINCTEFVDGHLNYRKSMPKLLKRIGIAVLSEEFVEIEEMMNPEEVKRKRKLINDVDAAQKKLSERKKHNSWVPKWLKPKKSKWKVMVEEAVEEGRDMQDLPENDVNNNENENPDEHEGIARQKRRDAALVDHGALMHELQLIKQAMHEDEIKNKACLPGEDKEVESSNDFLGESHYKPPSTPKINPPQSPNNFQLLSAGRTILPEDDDFDPRGKKKVEFSFPDDI.

Disordered regions lie at residues 1–151 and 163–190; these read MSDS…AVSS and LTSK…KSVN. Basic and acidic residues-rich tracts occupy residues 54–81 and 101–121; these read QAKE…EAGK and GIDR…HDTD. The APM2-interacting WQEMP motif signature appears at 143–147; the sequence is WQEMP. 3 N-linked (GlcNAc...) asparagine glycosylation sites follow: Asn190, Asn229, and Asn236. The tract at residues 230–267 is disordered; the sequence is SSQTSVNLTSSPSTTSLNNEKNNDDDDDDSYDEYEDDV. Positions 233–249 are enriched in low complexity; the sequence is TSVNLTSSPSTTSLNNE. Over residues 252–267 the composition is skewed to acidic residues; sequence NDDDDDDSYDEYEDDV. The N-linked (GlcNAc...) asparagine glycan is linked to Asn280. A helical membrane pass occupies residues 292 to 312; that stretch reads FAYVGAINILANQMCTNLATL. The tract at residues 385–448 is disordered; sequence NPWENDRDHE…SDVPGKVLDP (64 aa). Polar residues predominate over residues 404–427; sequence RMSPNEQNGSVQASTPDPEQSATP. Residue Asn411 is glycosylated (N-linked (GlcNAc...) asparagine). Position 435 is a phosphoserine (Ser435). Residues 457 to 477 form a helical membrane-spanning segment; sequence LNIDVAWTIICDLFLICLQSS. Asn495 is a glycosylation site (N-linked (GlcNAc...) asparagine). A run of 2 helical transmembrane segments spans residues 553–573 and 577–597; these read LVLG…IAAG and IGIT…VVAV. A glycan (N-linked (GlcNAc...) asparagine) is linked at Asn726. The chain crosses the membrane as a helical span at residues 818–838; the sequence is WFLAYLFRAAAGGFSAVMGIS. Asn850 carries N-linked (GlcNAc...) asparagine glycosylation. 2 disordered regions span residues 942 to 968 and 1010 to 1073; these read GRDM…EGIA and KEVE…PDDI. The segment covering 1027 to 1037 has biased composition (pro residues); sequence PSTPKINPPQS. Ser1037 bears the Phosphoserine mark.

This sequence belongs to the TMCO4 family. Interacts with RPP0. Interacts with APM2.

Its subcellular location is the golgi apparatus membrane. It is found in the early endosome membrane. The protein localises to the cytoplasmic vesicle. The protein resides in the clathrin-coated vesicle membrane. Functionally, probable lipase that recruits the AP-1-related (AP-1R) complex to membranes via interaction with APM2. The AP-1R complex is an adapter protein complex that mediates of cargo protein SNC1 sorting in clathrin-coated vesicles. This Saccharomyces cerevisiae (strain ATCC 204508 / S288c) (Baker's yeast) protein is Probable lipase MIL1.